We begin with the raw amino-acid sequence, 204 residues long: ATP-dependent Clp protease proteolytic subunit (204 aa).

S101 (nucleophile) is an active-site residue. H126 is an active-site residue.

It belongs to the peptidase S14 family. As to quaternary structure, component of the chloroplastic Clp protease core complex.

It localises to the plastid. Its subcellular location is the chloroplast stroma. The catalysed reaction is Hydrolysis of proteins to small peptides in the presence of ATP and magnesium. alpha-casein is the usual test substrate. In the absence of ATP, only oligopeptides shorter than five residues are hydrolyzed (such as succinyl-Leu-Tyr-|-NHMec, and Leu-Tyr-Leu-|-Tyr-Trp, in which cleavage of the -Tyr-|-Leu- and -Tyr-|-Trp bonds also occurs).. Functionally, cleaves peptides in various proteins in a process that requires ATP hydrolysis. Has a chymotrypsin-like activity. Plays a major role in the degradation of misfolded proteins. This chain is ATP-dependent Clp protease proteolytic subunit, found in Anthoceros angustus (Hornwort).